The primary structure comprises 348 residues: Nuclear receptor subfamily 1 group I member 3 (348 aa).

The nuclear receptor DNA-binding region spans 8 to 83 (PRSCMVCGDR…AGMKKEMILS (76 aa)). The NR C4-type zinc finger occupies 11 to 31 (CMVCGDRATGYHFHALTCEGC). The residue at position 38 (Thr38) is a Phosphothreonine; by PKC. The NR C4-type zinc finger occupies 47–71 (CPFAGSCKVNKAQRRHCPACRLQKC). The region spanning 109–348 (GQQELVQTLL…MMPLLQEICS (240 aa)) is the NR LBD domain.

This sequence belongs to the nuclear hormone receptor family. NR1 subfamily. As to quaternary structure, heterodimer of NR1I3 and RXR. Interacts with PSMC4. Interacts with ECT2. Directly interacts with DNAJC7; this complex may also include HSP90. Interacts with CRY1. Interacts with CRY2 in a ligand-dependent manner. In terms of processing, phosphorylated at Thr-38 by PKC, dephosphorylation of Thr-38 is required for nuclear translocation and activation.

It localises to the nucleus. The protein resides in the cytoplasm. Its subcellular location is the cytoskeleton. Functionally, binds and transactivates the retinoic acid response elements that control expression of the retinoic acid receptor beta 2 and alcohol dehydrogenase 3 genes. Transactivates both the phenobarbital responsive element module of the human CYP2B6 gene and the CYP3A4 xenobiotic response element. In Pusa sibirica (Baikal seal), this protein is Nuclear receptor subfamily 1 group I member 3 (NR1I3).